The primary structure comprises 171 residues: uncharacterized protein (171 aa).

It belongs to the mimivirus R24/R907 family.

This is an uncharacterized protein from Acanthamoeba polyphaga (Amoeba).